A 165-amino-acid polypeptide reads, in one-letter code: Ribosome maturation factor RimM (165 aa).

In terms of domain architecture, PRC barrel spans 94 to 163; sequence EDEFYIADLN…KDYVTLNYQR (70 aa).

The protein belongs to the RimM family. In terms of assembly, binds ribosomal protein uS19.

It localises to the cytoplasm. Functionally, an accessory protein needed during the final step in the assembly of 30S ribosomal subunit, possibly for assembly of the head region. Essential for efficient processing of 16S rRNA. May be needed both before and after RbfA during the maturation of 16S rRNA. It has affinity for free ribosomal 30S subunits but not for 70S ribosomes. The protein is Ribosome maturation factor RimM of Rickettsia akari (strain Hartford).